The chain runs to 170 residues: MVKKTIRVMVEGGKATPGPPLGPTLSPYKVNIPQVVKAINDATKDFEGLSVPVEITIDIDTKEFEVRVGIPTTTALLMKEAGAKQPTGDPAHQKIGNISFEQVVKVAILKRDSLTAKTLRAAVKTVLGTARSIGITVDGKDPKEVQKLVDEGVYDEILSRYEEEWSKGGQ.

The protein belongs to the universal ribosomal protein uL11 family. In terms of assembly, part of the ribosomal stalk of the 50S ribosomal subunit. Interacts with L10 and the large rRNA to form the base of the stalk. L10 forms an elongated spine to which L12 dimers bind in a sequential fashion forming a multimeric L10(L12)X complex.

Forms part of the ribosomal stalk which helps the ribosome interact with GTP-bound translation factors. This chain is Large ribosomal subunit protein uL11, found in Desulfurococcus amylolyticus (strain DSM 18924 / JCM 16383 / VKM B-2413 / 1221n) (Desulfurococcus kamchatkensis).